The chain runs to 34 residues: Photosystem II reaction center protein Psb30 (34 aa).

Residues 9–29 (QLIATGTIMLAGPAVIVLLAL) form a helical membrane-spanning segment.

It belongs to the Psb30/Ycf12 family. PSII is composed of 1 copy each of membrane proteins PsbA, PsbB, PsbC, PsbD, PsbE, PsbF, PsbH, PsbI, PsbJ, PsbK, PsbL, PsbM, PsbT, PsbX, PsbY, PsbZ, Psb30/Ycf12, peripheral proteins of the oxygen-evolving complex and a large number of cofactors. It forms dimeric complexes.

Its subcellular location is the plastid. The protein resides in the chloroplast thylakoid membrane. Functionally, a core subunit of photosystem II (PSII), probably helps stabilize the reaction center. The sequence is that of Photosystem II reaction center protein Psb30 from Phaeodactylum tricornutum (strain CCAP 1055/1).